Consider the following 291-residue polypeptide: Phosphate import ATP-binding protein PstB (291 aa).

Positions 1-17 (MANTNVKEKELAKHTDQ) are enriched in basic and acidic residues. Residues 1–40 (MANTNVKEKELAKHTDQSQESISTVVSSNEVKHNKESDSN) are disordered. The span at 18–29 (SQESISTVVSSN) shows a compositional bias: polar residues. Residues 30–40 (EVKHNKESDSN) show a composition bias toward basic and acidic residues. Positions 45 to 286 (YSTQNLDLWY…PSDKQTEDYI (242 aa)) constitute an ABC transporter domain. Position 77 to 84 (77 to 84 (GPSGCGKS)) interacts with ATP.

The protein belongs to the ABC transporter superfamily. Phosphate importer (TC 3.A.1.7) family. In terms of assembly, the complex is composed of two ATP-binding proteins (PstB), two transmembrane proteins (PstC and PstA) and a solute-binding protein (PstS).

Its subcellular location is the cell membrane. It catalyses the reaction phosphate(out) + ATP + H2O = ADP + 2 phosphate(in) + H(+). Part of the ABC transporter complex PstSACB involved in phosphate import. Responsible for energy coupling to the transport system. The polypeptide is Phosphate import ATP-binding protein PstB (Staphylococcus haemolyticus (strain JCSC1435)).